The chain runs to 86 residues: U1-theraphotoxin-Pc1a (86 aa).

A signal peptide spans 1–21; sequence MMRVLIVTAVFTFFLVLTSSG. A propeptide spanning residues 22-49 is cleaved from the precursor; the sequence is HDEDNEQRNILEGMFLDRAIETPKGLEE. Disulfide bonds link cysteine 53–cysteine 70, cysteine 60–cysteine 75, and cysteine 69–cysteine 80. Valine 84 is modified (valine amide).

In terms of tissue distribution, expressed by the venom gland.

It localises to the secreted. Functionally, possesses strong antiplasmodial activity against the intra-erythrocyte stage of P.falciparum in vitro. IC(50) for inhibiting P.falciparum growth is 1.59 uM. Interacts with infected and healthy erythrocytes. Does not lyse erythrocytes, is not cytotoxic to nucleated mammalian cells, and does not inhibit neuromuscular function. Has neither antibacterial nor antifungal activity. The protein is U1-theraphotoxin-Pc1a of Psalmopoeus cambridgei (Trinidad chevron tarantula).